Consider the following 661-residue polypeptide: L-type lectin-domain containing receptor kinase V.5 (661 aa).

The N-terminal stretch at 1–25 is a signal peptide; that stretch reads MSRELIILCQPILVLFLTLFYNSHG. The Extracellular segment spans residues 26-282; it reads YFVSQGSVGI…KTSNRTKTVL (257 aa). Positions 30-250 are legume-lectin like; the sequence is QGSVGIGFNG…GAIHYLMGWL (221 aa). N-linked (GlcNAc...) asparagine glycosylation is found at Asn-45, Asn-64, Asn-116, Asn-198, and Asn-276. The helical transmembrane segment at 283 to 303 threads the bilayer; it reads AVCLTVSVFAAFVASWIGFVF. Residues 304-661 lie on the Cytoplasmic side of the membrane; sequence YLRHKKVKEV…TDSSFVSHGR (358 aa). The Protein kinase domain occupies 338 to 596; it reads FKEKQLLGKG…LGVLCSHQAA (259 aa). Residues 344 to 352 and Lys-367 each bind ATP; that span reads LGKGGFGQV. The active-site Proton acceptor is Asp-464.

This sequence in the C-terminal section; belongs to the protein kinase superfamily. Ser/Thr protein kinase family. The protein in the N-terminal section; belongs to the leguminous lectin family. In terms of processing, autophosphorylated on a Ser residue. Expressed at low levels in stems, leaves, flowers and siliques.

It localises to the cell membrane. It catalyses the reaction L-seryl-[protein] + ATP = O-phospho-L-seryl-[protein] + ADP + H(+). It carries out the reaction L-threonyl-[protein] + ATP = O-phospho-L-threonyl-[protein] + ADP + H(+). Functionally, confers resistance to the pathogenic oomycetes Phytophthora infestans and Phytophthora capsici, but confers susceptibility to the pathogenic bacteria Pseudomonas syringae. The sequence is that of L-type lectin-domain containing receptor kinase V.5 from Arabidopsis thaliana (Mouse-ear cress).